A 310-amino-acid chain; its full sequence is Choline trimethylamine-lyase activating enzyme (310 aa).

The 288-residue stretch at 17–304 (YDGPGVRTLV…EACIRKYDFP (288 aa)) folds into the Radical SAM core domain. Positions 31, 35, 38, 57, 60, 63, and 99 each coordinate [4Fe-4S] cluster. Residue 37 to 39 (WCS) coordinates S-adenosyl-L-methionine. 2 consecutive 4Fe-4S ferredoxin-type domains span residues 48-77 (YQVLYKENLCVHCGACVPVCPAGVHTISAS) and 79-109 (LRHGFAEGAQCIGCRRCEDVCPSSALAVVGE). Residues G139, 188–190 (DVK), and H264 each bind S-adenosyl-L-methionine.

This sequence belongs to the organic radical-activating enzymes family. In terms of assembly, monomer. Requires [4Fe-4S] cluster as cofactor.

The enzyme catalyses glycyl-[protein] + reduced [flavodoxin] + S-adenosyl-L-methionine = glycin-2-yl radical-[protein] + semiquinone [flavodoxin] + 5'-deoxyadenosine + L-methionine + H(+). Its pathway is amine and polyamine metabolism; choline degradation. Catalyzes activation of the choline trimethylamine-lyase CutC under anaerobic conditions by generation of an organic free radical on a glycine residue, via a homolytic cleavage of S-adenosyl-L-methionine (SAM). Is involved in the anaerobic choline utilization pathway that allows D.alaskensis to grow on choline as a source of carbon and energy. In Oleidesulfovibrio alaskensis (strain ATCC BAA-1058 / DSM 17464 / G20) (Desulfovibrio alaskensis), this protein is Choline trimethylamine-lyase activating enzyme.